Consider the following 501-residue polypeptide: Lysine--tRNA ligase (501 aa).

Residues E410 and E417 each coordinate Mg(2+).

It belongs to the class-II aminoacyl-tRNA synthetase family. Homodimer. It depends on Mg(2+) as a cofactor.

The protein localises to the cytoplasm. It catalyses the reaction tRNA(Lys) + L-lysine + ATP = L-lysyl-tRNA(Lys) + AMP + diphosphate. The polypeptide is Lysine--tRNA ligase (Shewanella pealeana (strain ATCC 700345 / ANG-SQ1)).